A 485-amino-acid polypeptide reads, in one-letter code: Warthog protein 1 (485 aa).

Residues 1–21 (MMVMNPLTATFLAALIGTAAS) form the signal peptide. A disordered region spans residues 236-258 (DQRLSPSTDVQSDSYVSPTEADP). The segment covering 239–252 (LSPSTDVQSDSYVS) has biased composition (polar residues).

This sequence belongs to the hedgehog family. Post-translationally, the C-terminal domain displays an autoproteolysis activity.

The protein localises to the secreted. It localises to the cell surface. It is found in the cell membrane. The protein resides in the extracellular space. Functionally, intercellular signal essential for a variety of patterning events during development. This is Warthog protein 1 (wrt-1) from Caenorhabditis elegans.